The primary structure comprises 309 residues: Porphobilinogen deaminase (309 aa).

At cysteine 241 the chain carries S-(dipyrrolylmethanemethyl)cysteine.

Belongs to the HMBS family. In terms of assembly, monomer. Dipyrromethane is required as a cofactor.

The enzyme catalyses 4 porphobilinogen + H2O = hydroxymethylbilane + 4 NH4(+). It participates in porphyrin-containing compound metabolism; protoporphyrin-IX biosynthesis; coproporphyrinogen-III from 5-aminolevulinate: step 2/4. Tetrapolymerization of the monopyrrole PBG into the hydroxymethylbilane pre-uroporphyrinogen in several discrete steps. The polypeptide is Porphobilinogen deaminase (Desulforamulus reducens (strain ATCC BAA-1160 / DSM 100696 / MI-1) (Desulfotomaculum reducens)).